A 728-amino-acid polypeptide reads, in one-letter code: Catalase-peroxidase 1 (728 aa).

Positions 1–22 are cleaved as a signal peptide; sequence MDKTQSSQGKCPVMHGANSAVA. The segment at residues 97-225 is a cross-link (tryptophyl-tyrosyl-methioninium (Trp-Tyr) (with M-251)); sequence WHSAGTYRVA…LAAVMMGLIY (129 aa). His98 (proton acceptor) is an active-site residue. Positions 225-251 form a cross-link, tryptophyl-tyrosyl-methioninium (Tyr-Met) (with W-97); the sequence is YVNPEGVDGKPDPLRTAQDVRVTFARM. His266 contacts heme b.

It belongs to the peroxidase family. Peroxidase/catalase subfamily. Homodimer or homotetramer. Heme b is required as a cofactor. Formation of the three residue Trp-Tyr-Met cross-link is important for the catalase, but not the peroxidase activity of the enzyme.

It catalyses the reaction H2O2 + AH2 = A + 2 H2O. It carries out the reaction 2 H2O2 = O2 + 2 H2O. Functionally, bifunctional enzyme with both catalase and broad-spectrum peroxidase activity. In Shewanella sp. (strain MR-7), this protein is Catalase-peroxidase 1.